A 310-amino-acid polypeptide reads, in one-letter code: Methionyl-tRNA formyltransferase (310 aa).

A (6S)-5,6,7,8-tetrahydrofolate-binding site is contributed by 109-112 (SLLP).

This sequence belongs to the Fmt family.

It carries out the reaction L-methionyl-tRNA(fMet) + (6R)-10-formyltetrahydrofolate = N-formyl-L-methionyl-tRNA(fMet) + (6S)-5,6,7,8-tetrahydrofolate + H(+). In terms of biological role, attaches a formyl group to the free amino group of methionyl-tRNA(fMet). The formyl group appears to play a dual role in the initiator identity of N-formylmethionyl-tRNA by promoting its recognition by IF2 and preventing the misappropriation of this tRNA by the elongation apparatus. This is Methionyl-tRNA formyltransferase from Parvibaculum lavamentivorans (strain DS-1 / DSM 13023 / NCIMB 13966).